Consider the following 304-residue polypeptide: tRNA uridine(34) hydroxylase (304 aa).

A Rhodanese domain is found at 124-219 (QDEETLLIDT…YLETIPKEES (96 aa)). The active-site Cysteine persulfide intermediate is Cys179.

This sequence belongs to the TrhO family.

It carries out the reaction uridine(34) in tRNA + AH2 + O2 = 5-hydroxyuridine(34) in tRNA + A + H2O. Catalyzes oxygen-dependent 5-hydroxyuridine (ho5U) modification at position 34 in tRNAs. This Bartonella quintana (strain Toulouse) (Rochalimaea quintana) protein is tRNA uridine(34) hydroxylase.